Consider the following 128-residue polypeptide: MTKLLLVAAGGALGSVARYLVGVQALRLFGSNWPYGTFIVNLTGGLLMGLLAAWLALRGGAQQEHWRVLLGVGVMGGFTTFSAFSLETALMIEKRAYAQAFTYTTASVILSVAAIFAGLLIARRIFSV.

Helical transmembrane passes span 4–24 (LLLV…VGVQ), 37–57 (TFIV…WLAL), 72–92 (VGVM…ALMI), and 101–121 (FTYT…GLLI). G76 and T79 together coordinate Na(+).

Belongs to the fluoride channel Fluc/FEX (TC 1.A.43) family.

It localises to the cell inner membrane. It carries out the reaction fluoride(in) = fluoride(out). Na(+) is not transported, but it plays an essential structural role and its presence is essential for fluoride channel function. Its function is as follows. Fluoride-specific ion channel. Important for reducing fluoride concentration in the cell, thus reducing its toxicity. This is Fluoride-specific ion channel FluC from Caulobacter sp. (strain K31).